Reading from the N-terminus, the 87-residue chain is Small ribosomal subunit protein bS20 (87 aa).

The protein belongs to the bacterial ribosomal protein bS20 family.

Binds directly to 16S ribosomal RNA. This is Small ribosomal subunit protein bS20 from Geobacter sulfurreducens (strain ATCC 51573 / DSM 12127 / PCA).